Reading from the N-terminus, the 197-residue chain is Tic20 family protein Ycf60 (197 aa).

5 consecutive transmembrane segments (helical) span residues 3-23, 47-66, 81-101, 118-138, and 141-161; these read IIIA…GVGV, FGYY…PDVL, LVVV…MSYF, VSQA…LNAL, and MILM…LTMG.

Belongs to the Tic20 family.

The protein localises to the plastid. It is found in the chloroplast membrane. The sequence is that of Tic20 family protein Ycf60 (ycf60) from Cyanidioschyzon merolae (strain NIES-3377 / 10D) (Unicellular red alga).